Here is a 291-residue protein sequence, read N- to C-terminus: Elongation factor Ts (291 aa).

The involved in Mg(2+) ion dislocation from EF-Tu stretch occupies residues 82-85 (TDFC).

The protein belongs to the EF-Ts family.

The protein resides in the cytoplasm. In terms of biological role, associates with the EF-Tu.GDP complex and induces the exchange of GDP to GTP. It remains bound to the aminoacyl-tRNA.EF-Tu.GTP complex up to the GTP hydrolysis stage on the ribosome. The polypeptide is Elongation factor Ts (Methylobacillus flagellatus (strain ATCC 51484 / DSM 6875 / VKM B-1610 / KT)).